Reading from the N-terminus, the 228-residue chain is 2-C-methyl-D-erythritol 4-phosphate cytidylyltransferase (228 aa).

The protein belongs to the IspD/TarI cytidylyltransferase family. IspD subfamily.

The enzyme catalyses 2-C-methyl-D-erythritol 4-phosphate + CTP + H(+) = 4-CDP-2-C-methyl-D-erythritol + diphosphate. It functions in the pathway isoprenoid biosynthesis; isopentenyl diphosphate biosynthesis via DXP pathway; isopentenyl diphosphate from 1-deoxy-D-xylulose 5-phosphate: step 2/6. In terms of biological role, catalyzes the formation of 4-diphosphocytidyl-2-C-methyl-D-erythritol from CTP and 2-C-methyl-D-erythritol 4-phosphate (MEP). This chain is 2-C-methyl-D-erythritol 4-phosphate cytidylyltransferase, found in Geobacillus kaustophilus (strain HTA426).